Consider the following 97-residue polypeptide: Defensin-like protein 196 (97 aa).

The signal sequence occupies residues 1–28 (MAKMSALSIFAIFIILVLVIFEIPEIEA). 4 disulfide bridges follow: Cys33/Cys85, Cys46/Cys70, Cys55/Cys80, and Cys59/Cys82.

This sequence belongs to the DEFL family. Protease inhibitor I18 (RTI/MTI-2) subfamily.

It is found in the secreted. The protein is Defensin-like protein 196 (ATTI4) of Arabidopsis thaliana (Mouse-ear cress).